The following is a 314-amino-acid chain: Nodulation protein D 1 (314 aa).

The HTH lysR-type domain maps to 6-63 (LDLNLLVALDALMTERNLTAAARQINLSQPAMSAAIARLRSYFRDELFTMRGRELVPT). Positions 23-42 (LTAAARQINLSQPAMSAAIA) form a DNA-binding region, H-T-H motif.

The protein belongs to the LysR transcriptional regulatory family.

Functionally, nodD regulates the expression of the nodABCFE genes which encode other nodulation proteins. NodD is also a negative regulator of its own expression. Binds flavonoids as inducers. This chain is Nodulation protein D 1 (nodD1), found in Bradyrhizobium elkanii.